The primary structure comprises 505 residues: ATP synthase subunit alpha (505 aa).

169 to 176 (GDRKTGKT) is a binding site for ATP.

The protein belongs to the ATPase alpha/beta chains family. F-type ATPases have 2 components, CF(1) - the catalytic core - and CF(0) - the membrane proton channel. CF(1) has five subunits: alpha(3), beta(3), gamma(1), delta(1), epsilon(1). CF(0) has three main subunits: a(1), b(2) and c(9-12). The alpha and beta chains form an alternating ring which encloses part of the gamma chain. CF(1) is attached to CF(0) by a central stalk formed by the gamma and epsilon chains, while a peripheral stalk is formed by the delta and b chains.

The protein resides in the cell membrane. It carries out the reaction ATP + H2O + 4 H(+)(in) = ADP + phosphate + 5 H(+)(out). Its function is as follows. Produces ATP from ADP in the presence of a proton gradient across the membrane. The alpha chain is a regulatory subunit. This is ATP synthase subunit alpha from Pediococcus pentosaceus (strain ATCC 25745 / CCUG 21536 / LMG 10740 / 183-1w).